Reading from the N-terminus, the 341-residue chain is Cell division protein ZipA (341 aa).

Topologically, residues 1–6 (MENLQL) are periplasmic. A helical transmembrane segment spans residues 7-27 (VLFVLGAIAIVAVLVHGFWSI). Residues 28–341 (RKQQPKSLKE…YLQRIRTQNS (314 aa)) lie on the Cytoplasmic side of the membrane. Disordered stretches follow at residues 35 to 134 (LKES…PVLS) and 157 to 201 (QSSL…PEPE). Residues 90–100 (TLTSEGQMDSS) show a composition bias toward polar residues. Over residues 175 to 190 (SIEVPEPVSEPVLESV) the composition is skewed to low complexity. Over residues 192–201 (EPEPVAPEPE) the composition is skewed to pro residues.

This sequence belongs to the ZipA family. In terms of assembly, interacts with FtsZ via their C-terminal domains.

It localises to the cell inner membrane. Essential cell division protein that stabilizes the FtsZ protofilaments by cross-linking them and that serves as a cytoplasmic membrane anchor for the Z ring. Also required for the recruitment to the septal ring of downstream cell division proteins. The sequence is that of Cell division protein ZipA from Shewanella sediminis (strain HAW-EB3).